Reading from the N-terminus, the 105-residue chain is Synaptic plasticity regulator PANTS (105 aa).

The protein belongs to the UPF0545 family. Interacts with RTN4 isoform A/Nogo-A; the interaction results in enhanced RTN4-mediated inhibition of AMPA receptor clustering. Also interacts with NCAM1, RANBP2 and CCT8. In terms of processing, rapidly degraded by proteolysis following neuronal stimulation, resulting in increased AMPA receptor clustering.

It localises to the synapse. Its subcellular location is the synaptic cleft. Negatively regulates long-term potentiation and modulates adult synaptic plasticity. Stabilizes the interaction of RTN4 isoform A/Nogo-A with its receptors, inhibiting clustering of postsynaptic AMPA receptors at synaptic sites. Upon neuronal stimulation, degraded at synapses, reducing RTN4 signaling and allowing AMPA receptor clustering at individual synapses. The polypeptide is Synaptic plasticity regulator PANTS (Pongo abelii (Sumatran orangutan)).